A 340-amino-acid chain; its full sequence is Phosphoribosylformylglycinamidine cyclo-ligase (340 aa).

Belongs to the AIR synthase family.

The protein resides in the cytoplasm. It catalyses the reaction 2-formamido-N(1)-(5-O-phospho-beta-D-ribosyl)acetamidine + ATP = 5-amino-1-(5-phospho-beta-D-ribosyl)imidazole + ADP + phosphate + H(+). Its pathway is purine metabolism; IMP biosynthesis via de novo pathway; 5-amino-1-(5-phospho-D-ribosyl)imidazole from N(2)-formyl-N(1)-(5-phospho-D-ribosyl)glycinamide: step 2/2. The polypeptide is Phosphoribosylformylglycinamidine cyclo-ligase (Streptococcus pneumoniae (strain 70585)).